The sequence spans 377 residues: MAKKDYYEVLGLQKGATEKDIKRAYKRLAAKYHPDKNQGSKDSEEKFKQITEAYEILTDDQKRAAYDQYGHAAFEQGSSNGGFNGFGGGFGGFEDIFSEMFGGGFGGGSRRQHVVRGQDLRYDIEISLEEAVKGCKKDIRLSTLAECDNCHGTGAEAGTKVENCPHCHGAGRIRRQQGFFVTEAVCPSCHGTGKKIEKPCHSCHGDGRVQKAKNLSVTIPAGVDTGNQLRLSGEGEAGENGAPAGDLYVVIHVREHNIFTRDGANLYCEVPISFSMAALGGEIEVPTLDGKLKLKIPTETQTGKLFRVRGKGVVSPRGGYAGDLICKVVVETPVQLNEEQKELLRQLEISLDGKANHRPQQAGFLDSVKNFFTHLGK.

The region spanning 5–70 is the J domain; the sequence is DYYEVLGLQK…QKRAAYDQYG (66 aa). Residues 134–212 form a CR-type zinc finger; that stretch reads GCKKDIRLST…CHGDGRVQKA (79 aa). Zn(2+) is bound by residues C147, C150, C164, C167, C186, C189, C200, and C203. CXXCXGXG motif repeat units follow at residues 147 to 154, 164 to 171, 186 to 193, and 200 to 207; these read CDNCHGTG, CPHCHGAG, CPSCHGTG, and CHSCHGDG.

The protein belongs to the DnaJ family. Homodimer. Requires Zn(2+) as cofactor.

The protein localises to the cytoplasm. Its function is as follows. Participates actively in the response to hyperosmotic and heat shock by preventing the aggregation of stress-denatured proteins and by disaggregating proteins, also in an autonomous, DnaK-independent fashion. Unfolded proteins bind initially to DnaJ; upon interaction with the DnaJ-bound protein, DnaK hydrolyzes its bound ATP, resulting in the formation of a stable complex. GrpE releases ADP from DnaK; ATP binding to DnaK triggers the release of the substrate protein, thus completing the reaction cycle. Several rounds of ATP-dependent interactions between DnaJ, DnaK and GrpE are required for fully efficient folding. Also involved, together with DnaK and GrpE, in the DNA replication of plasmids through activation of initiation proteins. This chain is Chaperone protein DnaJ, found in Haemophilus ducreyi (strain 35000HP / ATCC 700724).